A 472-amino-acid polypeptide reads, in one-letter code: Adenosylhomocysteinase (472 aa).

3 residues coordinate substrate: threonine 64, aspartate 138, and glutamate 198. Residue 199–201 (TTT) coordinates NAD(+). Substrate contacts are provided by lysine 228 and aspartate 232. NAD(+) is bound by residues asparagine 233, 262 to 267 (GFGDVG), glutamate 285, asparagine 320, 341 to 343 (IGH), and asparagine 386.

The protein belongs to the adenosylhomocysteinase family. The cofactor is NAD(+).

Its subcellular location is the cytoplasm. The catalysed reaction is S-adenosyl-L-homocysteine + H2O = L-homocysteine + adenosine. The protein operates within amino-acid biosynthesis; L-homocysteine biosynthesis; L-homocysteine from S-adenosyl-L-homocysteine: step 1/1. May play a key role in the regulation of the intracellular concentration of adenosylhomocysteine. This Prochlorococcus marinus (strain MIT 9215) protein is Adenosylhomocysteinase.